Consider the following 228-residue polypeptide: Phosphoribosylformylglycinamidine synthase subunit PurQ (228 aa).

One can recognise a Glutamine amidotransferase type-1 domain in the interval 3-226 (FAVVVFPGSN…VTYWRDAHVV (224 aa)). The active-site Nucleophile is C86. Catalysis depends on residues H195 and E197.

Part of the FGAM synthase complex composed of 1 PurL, 1 PurQ and 2 PurS subunits.

The protein resides in the cytoplasm. It carries out the reaction N(2)-formyl-N(1)-(5-phospho-beta-D-ribosyl)glycinamide + L-glutamine + ATP + H2O = 2-formamido-N(1)-(5-O-phospho-beta-D-ribosyl)acetamidine + L-glutamate + ADP + phosphate + H(+). The enzyme catalyses L-glutamine + H2O = L-glutamate + NH4(+). Its pathway is purine metabolism; IMP biosynthesis via de novo pathway; 5-amino-1-(5-phospho-D-ribosyl)imidazole from N(2)-formyl-N(1)-(5-phospho-D-ribosyl)glycinamide: step 1/2. In terms of biological role, part of the phosphoribosylformylglycinamidine synthase complex involved in the purines biosynthetic pathway. Catalyzes the ATP-dependent conversion of formylglycinamide ribonucleotide (FGAR) and glutamine to yield formylglycinamidine ribonucleotide (FGAM) and glutamate. The FGAM synthase complex is composed of three subunits. PurQ produces an ammonia molecule by converting glutamine to glutamate. PurL transfers the ammonia molecule to FGAR to form FGAM in an ATP-dependent manner. PurS interacts with PurQ and PurL and is thought to assist in the transfer of the ammonia molecule from PurQ to PurL. This is Phosphoribosylformylglycinamidine synthase subunit PurQ from Anoxybacillus flavithermus (strain DSM 21510 / WK1).